Here is a 426-residue protein sequence, read N- to C-terminus: Dihydroorotase (426 aa).

Zn(2+)-binding residues include H62 and H64. Substrate is bound by residues 64-66 (HLR) and N96. The Zn(2+) site is built by D154, H181, and H234. N280 provides a ligand contact to substrate. D307 serves as a coordination point for Zn(2+). Residue D307 is part of the active site. Residues H311 and 325 to 326 (FG) each bind substrate.

The protein belongs to the metallo-dependent hydrolases superfamily. DHOase family. Class I DHOase subfamily. Zn(2+) serves as cofactor.

The enzyme catalyses (S)-dihydroorotate + H2O = N-carbamoyl-L-aspartate + H(+). The protein operates within pyrimidine metabolism; UMP biosynthesis via de novo pathway; (S)-dihydroorotate from bicarbonate: step 3/3. Catalyzes the reversible cyclization of carbamoyl aspartate to dihydroorotate. This chain is Dihydroorotase, found in Desulforapulum autotrophicum (strain ATCC 43914 / DSM 3382 / VKM B-1955 / HRM2) (Desulfobacterium autotrophicum).